The following is a 231-amino-acid chain: Probable septum site-determining protein MinC (231 aa).

The interval 102 to 125 is disordered; that stretch reads KEKAPRPAPAPQAPTQNTTPVTKT. A compositionally biased stretch (low complexity) spans 114–123; sequence APTQNTTPVT.

This sequence belongs to the MinC family. In terms of assembly, interacts with MinD and FtsZ.

Cell division inhibitor that blocks the formation of polar Z ring septums. Rapidly oscillates between the poles of the cell to destabilize FtsZ filaments that have formed before they mature into polar Z rings. Prevents FtsZ polymerization. This is Probable septum site-determining protein MinC from Escherichia coli O45:K1 (strain S88 / ExPEC).